Here is a 189-residue protein sequence, read N- to C-terminus: Peptidyl-tRNA hydrolase (189 aa).

A tRNA-binding site is contributed by tyrosine 15. Histidine 20 serves as the catalytic Proton acceptor. TRNA-binding residues include phenylalanine 66, asparagine 68, and asparagine 114.

Belongs to the PTH family. In terms of assembly, monomer.

Its subcellular location is the cytoplasm. The catalysed reaction is an N-acyl-L-alpha-aminoacyl-tRNA + H2O = an N-acyl-L-amino acid + a tRNA + H(+). Its function is as follows. Hydrolyzes ribosome-free peptidyl-tRNAs (with 1 or more amino acids incorporated), which drop off the ribosome during protein synthesis, or as a result of ribosome stalling. Functionally, catalyzes the release of premature peptidyl moieties from peptidyl-tRNA molecules trapped in stalled 50S ribosomal subunits, and thus maintains levels of free tRNAs and 50S ribosomes. The sequence is that of Peptidyl-tRNA hydrolase from Streptococcus pneumoniae serotype 2 (strain D39 / NCTC 7466).